The chain runs to 272 residues: SPbeta prophage-derived aminoglycoside N(3')-acetyltransferase-like protein YokD (272 aa).

Residues 38–44 and glutamine 113 contribute to the CoA site; that span reads LSSIGWV.

Belongs to the antibiotic N-acetyltransferase family. As to quaternary structure, homodimer.

Functionally, may contribute to antibiotic resistance. The polypeptide is SPbeta prophage-derived aminoglycoside N(3')-acetyltransferase-like protein YokD (yokD) (Bacillus subtilis (strain 168)).